A 75-amino-acid chain; its full sequence is Large ribosomal subunit protein bL31 (75 aa).

Belongs to the bacterial ribosomal protein bL31 family. Type A subfamily. In terms of assembly, part of the 50S ribosomal subunit.

Functionally, binds the 23S rRNA. In Chlorobium phaeobacteroides (strain BS1), this protein is Large ribosomal subunit protein bL31.